Consider the following 707-residue polypeptide: GDNF-inducible zinc finger protein 1 (707 aa).

Residues 31–103 form the BTB domain; sequence CDVTVIVDYQ…VYTARVRVKE (73 aa). A compositionally biased stretch (polar residues) spans 149-165; it reads VEASSGPQVSVTPSSKA. Disordered regions lie at residues 149–221 and 243–309; these read VEAS…PKIR and RRLR…KDGE. 3 stretches are compositionally biased toward basic and acidic residues: residues 198-213, 243-278, and 287-298; these read PSKKCKEKLDKKKDVA, RRLREQQKSAEEAAKNDKCPQDQSPDNERVEAEPAS, and VEREESLQKVEG. C2H2-type zinc fingers lie at residues 316-338, 347-370, 376-399, 406-428, 434-456, 462-484, 490-512, 518-540, 546-568, and 574-596; these read FQCTVCDKAFLYEKSFLKHIKYH, YRCDTCGQTFANRCNLKSHQRHVH, FPCEMCAKKFKRKKDVKRHVLQVH, HRCGQCGKGLSSKTALRLHERTH, YGCTKCDAKFSQPSALKTHLRVH, FVCDECGARFTQNHMLIYHKRCH, FMCETCGKSFASKEYLKHHNRIH, FKCEVCLRTFAQRNSLYQHIKVH, YCCDQCGKQFTQVNALQRHHRIH, and YMCNACGRTFTDKSTLRRHTSIH. A Phosphoserine modification is found at serine 612.

It belongs to the krueppel C2H2-type zinc-finger protein family. In terms of assembly, interacts with NCL.

Its subcellular location is the cytoplasm. It is found in the nucleus. It localises to the nucleoplasm. The protein resides in the nucleolus. Transcriptional repressor that binds the GZF1 responsive element (GRE) (consensus: 5'-TGCGCN[TG][CA]TATA-3'). May be regulating VSX2/HOX10 expression. The polypeptide is GDNF-inducible zinc finger protein 1 (Gzf1) (Rattus norvegicus (Rat)).